We begin with the raw amino-acid sequence, 192 residues long: Adapter protein MecA (192 aa).

Belongs to the MecA family. Homodimer.

Enables the recognition and targeting of unfolded and aggregated proteins to the ClpC protease or to other proteins involved in proteolysis. Acts negatively in the development of competence by binding ComK and recruiting it to the ClpCP protease. When overexpressed, inhibits sporulation. Also involved in Spx degradation by ClpC. This is Adapter protein MecA from Oceanobacillus iheyensis (strain DSM 14371 / CIP 107618 / JCM 11309 / KCTC 3954 / HTE831).